We begin with the raw amino-acid sequence, 365 residues long: tRNA (guanine(6)-N2)-methyltransferase (365 aa).

The 114-residue stretch at 69-182 (NENSRLLHRV…KDVFFLGIDT (114 aa)) folds into the THUMP domain. S-adenosyl-L-methionine is bound by residues 198–202 (HPAHL), 228–230 (SGT), glutamate 248, 276–277 (DA), and asparagine 293.

It belongs to the methyltransferase superfamily. As to quaternary structure, monomer in solution.

It is found in the cytoplasm. It carries out the reaction guanosine(6) in tRNA + S-adenosyl-L-methionine = N(2)-methylguanosine(6) in tRNA + S-adenosyl-L-homocysteine + H(+). S-adenosyl-L-methionine-dependent methyltransferase that catalyzes the methylation of the guanosine nucleotide at position 6 (m2G6) in tRNA(Phe). The polypeptide is tRNA (guanine(6)-N2)-methyltransferase (Pyrococcus furiosus (strain ATCC 43587 / DSM 3638 / JCM 8422 / Vc1)).